Here is a 157-residue protein sequence, read N- to C-terminus: Protein Smg homolog (157 aa).

Belongs to the Smg family.

The chain is Protein Smg homolog from Shewanella frigidimarina (strain NCIMB 400).